We begin with the raw amino-acid sequence, 842 residues long: G-type lectin S-receptor-like serine/threonine-protein kinase At1g11330 (842 aa).

The first 29 residues, 1–29 (MVVSVTIRRRFVLLLLACTCLLSRRLCFG), serve as a signal peptide directing secretion. The Extracellular segment spans residues 30-444 (EDRITFSSPI…AHSELKTHSN (415 aa)). One can recognise a Bulb-type lectin domain in the interval 32–157 (RITFSSPIKD…RNNGEILWES (126 aa)). Residues N63, N94, N122, N130, N196, and N260 are each glycosylated (N-linked (GlcNAc...) asparagine). In terms of domain architecture, EGF-like; atypical spans 294-330 (PYTDCDAYGRCGRFGSCHAGENPPCKCVKGFVPKNNT). 2 cysteine pairs are disulfide-bonded: C298–C310 and C304–C318. N328, N336, N354, and N396 each carry an N-linked (GlcNAc...) asparagine glycan. The region spanning 349 to 435 (CERQRNVSNG…SGIDLFIRVA (87 aa)) is the PAN domain. Intrachain disulfides connect C389/C410 and C393/C399. Residues 445-465 (LAVMIAAPVIGVMLIAAVCVL) traverse the membrane as a helical segment. At 466–842 (LACRKYKKRP…DVSLTAVTGR (377 aa)) the chain is on the cytoplasmic side. One can recognise a Protein kinase domain in the interval 524–810 (FSLRNKLGQG…SLADPKQPAF (287 aa)). ATP-binding positions include 530–538 (LGQGGFGPV) and K552. Phosphoserine is present on residues S558 and S573. A caM-binding region spans residues 613–630 (MKQKILDWKTRFNIMEGI). The Proton acceptor role is filled by D649. A phosphoserine mark is found at S653 and S666. Position 683 is a phosphothreonine (T683). S726, S727, S821, and S830 each carry phosphoserine. The tract at residues 814 to 842 (RGASEAESSDQSSQKVSINDVSLTAVTGR) is disordered. Over residues 818-827 (EAESSDQSSQ) the composition is skewed to low complexity. Polar residues predominate over residues 828–842 (KVSINDVSLTAVTGR). Phosphothreonine is present on T837.

Belongs to the protein kinase superfamily. Ser/Thr protein kinase family.

Its subcellular location is the cell membrane. The catalysed reaction is L-seryl-[protein] + ATP = O-phospho-L-seryl-[protein] + ADP + H(+). It carries out the reaction L-threonyl-[protein] + ATP = O-phospho-L-threonyl-[protein] + ADP + H(+). This is G-type lectin S-receptor-like serine/threonine-protein kinase At1g11330 from Arabidopsis thaliana (Mouse-ear cress).